A 165-amino-acid polypeptide reads, in one-letter code: Nucleotide-binding protein Tfu_2672 (165 aa).

It belongs to the YajQ family.

In terms of biological role, nucleotide-binding protein. In Thermobifida fusca (strain YX), this protein is Nucleotide-binding protein Tfu_2672.